Here is a 367-residue protein sequence, read N- to C-terminus: Alanine racemase (367 aa).

The Proton acceptor; specific for D-alanine role is filled by lysine 40. Lysine 40 carries the N6-(pyridoxal phosphate)lysine modification. Arginine 136 is a binding site for substrate. Tyrosine 263 serves as the catalytic Proton acceptor; specific for L-alanine. Methionine 310 contacts substrate.

Belongs to the alanine racemase family. It depends on pyridoxal 5'-phosphate as a cofactor.

It catalyses the reaction L-alanine = D-alanine. Its pathway is amino-acid biosynthesis; D-alanine biosynthesis; D-alanine from L-alanine: step 1/1. In terms of biological role, catalyzes the interconversion of L-alanine and D-alanine. May also act on other amino acids. This is Alanine racemase (alr) from Streptococcus pneumoniae (strain 70585).